The following is a 113-amino-acid chain: MVRSLEEIIYIIYSDDSVVNISLASARCDGGPRRPLSRRGEEARRARAPSYEEQESSSFFHSKAHFFMWGRESMSFVYLHSVESYSLQFHDRCASYNDTFYPTNFTPIYIHTI.

Positions 28-55 are disordered; that stretch reads CDGGPRRPLSRRGEEARRARAPSYEEQE.

This is an uncharacterized protein from Human cytomegalovirus (strain AD169) (HHV-5).